Here is a 407-residue protein sequence, read N- to C-terminus: Serine/threonine transporter SstT (407 aa).

The next 9 membrane-spanning stretches (helical) occupy residues 12 to 32 (GNLI…GISS), 42 to 62 (LGIL…FILI), 81 to 101 (IIIL…LANF), 141 to 161 (ALSS…GIAL), 179 to 199 (VLKI…GLVA), 218 to 238 (ILLV…IVFF), 245 to 267 (FPLI…SSAA), 288 to 308 (ISIP…IAIL), and 330 to 350 (IIAT…LLLI).

This sequence belongs to the dicarboxylate/amino acid:cation symporter (DAACS) (TC 2.A.23) family.

The protein localises to the cell inner membrane. The enzyme catalyses L-serine(in) + Na(+)(in) = L-serine(out) + Na(+)(out). It carries out the reaction L-threonine(in) + Na(+)(in) = L-threonine(out) + Na(+)(out). Involved in the import of serine and threonine into the cell, with the concomitant import of sodium (symport system). This chain is Serine/threonine transporter SstT, found in Campylobacter jejuni subsp. jejuni serotype O:2 (strain ATCC 700819 / NCTC 11168).